Here is a 192-residue protein sequence, read N- to C-terminus: Late embryogenesis abundant protein 47 (192 aa).

A Nuclear localization signal (NLS) motif is present at residues 5 to 9 (QLQKP). SMP domains are found at residues 68-125 (ITIG…LNAR) and 133-190 (TTLA…RINQ). A disordered region spans residues 146 to 174 (LPSDKAATRKDAEGVTGAEMRNDPHLTTY). Residues 147 to 158 (PSDKAATRKDAE) show a composition bias toward basic and acidic residues.

The protein belongs to the LEA type SMP family.

It is found in the cytoplasm. The protein resides in the nucleus. Its function is as follows. LEA proteins are late embryonic proteins abundant in higher plant seed embryos. The function of those proteins is not known. The sequence is that of Late embryogenesis abundant protein 47 from Arabidopsis thaliana (Mouse-ear cress).